The sequence spans 197 residues: Probable GTP-binding protein EngB (197 aa).

Residues 22–195 enclose the EngB-type G domain; that stretch reads NLPEIAFVGR…VDYLFDDLVE (174 aa). GTP is bound by residues 30-37, 57-61, 75-78, 142-145, and 174-176; these read GRSNVGKS, GKTRL, DLPG, TKSD, and FSS. Positions 37 and 59 each coordinate Mg(2+).

Belongs to the TRAFAC class TrmE-Era-EngA-EngB-Septin-like GTPase superfamily. EngB GTPase family. Requires Mg(2+) as cofactor.

In terms of biological role, necessary for normal cell division and for the maintenance of normal septation. This chain is Probable GTP-binding protein EngB, found in Clostridium perfringens (strain SM101 / Type A).